A 566-amino-acid polypeptide reads, in one-letter code: Lactase-like protein (566 aa).

Positions Met-1–Thr-20 are cleaved as a signal peptide. Residues Ala-21 to Glu-540 lie on the Extracellular side of the membrane. N-linked (GlcNAc...) asparagine glycans are attached at residues Asn-170 and Asn-244. The chain crosses the membrane as a helical span at residues Ile-541–Leu-561. Residues Leu-562–Gly-566 are Cytoplasmic-facing.

This sequence belongs to the glycosyl hydrolase 1 family. Klotho subfamily. In terms of assembly, may form dimers. As to expression, strongly expressed in the lens of the eye, where it localizes to the equatorial epithelium and outer layers of newly extending fiber cells (at protein level). May also be expressed in kidney and skin. However, another study suggests that expression is specific to eye and is minimal in other tissues.

Its subcellular location is the endoplasmic reticulum membrane. Its function is as follows. Plays a role in formation of the lens suture in the eye, which is important for normal optical properties of the lens. The polypeptide is Lactase-like protein (Lctl) (Mus musculus (Mouse)).